Consider the following 312-residue polypeptide: DNA-directed RNA polymerase subunit alpha (312 aa).

An alpha N-terminal domain (alpha-NTD) region spans residues 1 to 229 (MLQYQIDRIE…ELFQPLATVT (229 aa)). Residues 239–312 (EPTAEAQIPL…IQIPQSRTSA (74 aa)) are alpha C-terminal domain (alpha-CTD).

Belongs to the RNA polymerase alpha chain family. In cyanobacteria the RNAP catalytic core is composed of 2 alpha, 1 beta, 1 beta', 1 gamma and 1 omega subunit. When a sigma factor is associated with the core the holoenzyme is formed, which can initiate transcription.

It catalyses the reaction RNA(n) + a ribonucleoside 5'-triphosphate = RNA(n+1) + diphosphate. In terms of biological role, DNA-dependent RNA polymerase catalyzes the transcription of DNA into RNA using the four ribonucleoside triphosphates as substrates. The polypeptide is DNA-directed RNA polymerase subunit alpha (Synechococcus sp. (strain WH7803)).